Reading from the N-terminus, the 540-residue chain is Glucose-6-phosphate isomerase (540 aa).

Residue glutamate 350 is the Proton donor of the active site. Residues histidine 381 and lysine 503 contribute to the active site.

The protein belongs to the GPI family.

It localises to the cytoplasm. The enzyme catalyses alpha-D-glucose 6-phosphate = beta-D-fructose 6-phosphate. Its pathway is carbohydrate biosynthesis; gluconeogenesis. It functions in the pathway carbohydrate degradation; glycolysis; D-glyceraldehyde 3-phosphate and glycerone phosphate from D-glucose: step 2/4. Catalyzes the reversible isomerization of glucose-6-phosphate to fructose-6-phosphate. The protein is Glucose-6-phosphate isomerase of Paraburkholderia phymatum (strain DSM 17167 / CIP 108236 / LMG 21445 / STM815) (Burkholderia phymatum).